The following is a 399-amino-acid chain: ATP-dependent RNA helicase FAL1 (399 aa).

The short motif at 26–54 (RTFESMRLKPELLKGIYAYGFEAPSAIQS) is the Q motif element. One can recognise a Helicase ATP-binding domain in the interval 57–227 (IMQIISGRDT…GKFTTDPVKI (171 aa)). 70 to 77 (AQSGTGKT) lines the ATP pocket. Positions 175–178 (DEAD) match the DEAD box motif. A Helicase C-terminal domain is found at 238-399 (GIKQYYIQCE…EMPSNVNDVM (162 aa)).

Belongs to the DEAD box helicase family. DDX48/FAL1 subfamily.

The protein localises to the nucleus. It localises to the nucleolus. The enzyme catalyses ATP + H2O = ADP + phosphate + H(+). Its function is as follows. ATP-dependent RNA helicase involved in 40S ribosomal subunit biogenesis. Required for the processing and cleavage of 35S pre-rRNA at sites A0, A1, and A2, leading to mature 18S rRNA. The polypeptide is ATP-dependent RNA helicase FAL1 (FAL1) (Lodderomyces elongisporus (strain ATCC 11503 / CBS 2605 / JCM 1781 / NBRC 1676 / NRRL YB-4239) (Yeast)).